The sequence spans 159 residues: Crossover junction endodeoxyribonuclease RuvC (159 aa).

Catalysis depends on residues aspartate 7, glutamate 67, and aspartate 139. Mg(2+) contacts are provided by aspartate 7, glutamate 67, and aspartate 139.

It belongs to the RuvC family. Homodimer which binds Holliday junction (HJ) DNA. The HJ becomes 2-fold symmetrical on binding to RuvC with unstacked arms; it has a different conformation from HJ DNA in complex with RuvA. In the full resolvosome a probable DNA-RuvA(4)-RuvB(12)-RuvC(2) complex forms which resolves the HJ. Mg(2+) is required as a cofactor.

It localises to the cytoplasm. It catalyses the reaction Endonucleolytic cleavage at a junction such as a reciprocal single-stranded crossover between two homologous DNA duplexes (Holliday junction).. The RuvA-RuvB-RuvC complex processes Holliday junction (HJ) DNA during genetic recombination and DNA repair. Endonuclease that resolves HJ intermediates. Cleaves cruciform DNA by making single-stranded nicks across the HJ at symmetrical positions within the homologous arms, yielding a 5'-phosphate and a 3'-hydroxyl group; requires a central core of homology in the junction. The consensus cleavage sequence is 5'-(A/T)TT(C/G)-3'. Cleavage occurs on the 3'-side of the TT dinucleotide at the point of strand exchange. HJ branch migration catalyzed by RuvA-RuvB allows RuvC to scan DNA until it finds its consensus sequence, where it cleaves and resolves the cruciform DNA. This chain is Crossover junction endodeoxyribonuclease RuvC, found in Orientia tsutsugamushi (strain Boryong) (Rickettsia tsutsugamushi).